The primary structure comprises 499 residues: Guanosine-5'-triphosphate,3'-diphosphate pyrophosphatase (499 aa).

This sequence belongs to the GppA/Ppx family. GppA subfamily.

The enzyme catalyses guanosine 3'-diphosphate 5'-triphosphate + H2O = guanosine 3',5'-bis(diphosphate) + phosphate + H(+). The protein operates within purine metabolism; ppGpp biosynthesis; ppGpp from GTP: step 2/2. Its function is as follows. Catalyzes the conversion of pppGpp to ppGpp. Guanosine pentaphosphate (pppGpp) is a cytoplasmic signaling molecule which together with ppGpp controls the 'stringent response', an adaptive process that allows bacteria to respond to amino acid starvation, resulting in the coordinated regulation of numerous cellular activities. This is Guanosine-5'-triphosphate,3'-diphosphate pyrophosphatase from Klebsiella pneumoniae subsp. pneumoniae (strain ATCC 700721 / MGH 78578).